Here is a 160-residue protein sequence, read N- to C-terminus: Cytochrome b6-f complex subunit 4 (160 aa).

3 helical membrane passes run 36–56 (LLYVFPVVILGTIACSIGLAI), 95–115 (LLGVLSMAAVPAGLLTVPFIE), and 131–151 (TIFLISTVITIWLGIGATMPI).

The protein belongs to the cytochrome b family. PetD subfamily. As to quaternary structure, the 4 large subunits of the cytochrome b6-f complex are cytochrome b6, subunit IV (17 kDa polypeptide, petD), cytochrome f and the Rieske protein, while the 4 small subunits are petG, petL, petM and petN. The complex functions as a dimer.

The protein localises to the plastid. It is found in the chloroplast thylakoid membrane. Component of the cytochrome b6-f complex, which mediates electron transfer between photosystem II (PSII) and photosystem I (PSI), cyclic electron flow around PSI, and state transitions. This is Cytochrome b6-f complex subunit 4 from Porphyra purpurea (Red seaweed).